The sequence spans 884 residues: Protein translocase subunit SecA (884 aa).

Residues Gln-83, 101–105 (GEGKT), and Asp-491 contribute to the ATP site.

This sequence belongs to the SecA family.

It is found in the plastid. Its subcellular location is the chloroplast stroma. The protein resides in the chloroplast thylakoid membrane. It catalyses the reaction ATP + H2O + cellular proteinSide 1 = ADP + phosphate + cellular proteinSide 2.. Functionally, has a central role in coupling the hydrolysis of ATP to the transfer of proteins across the thylakoid membrane. In Porphyra purpurea (Red seaweed), this protein is Protein translocase subunit SecA.